Reading from the N-terminus, the 199-residue chain is ATP-dependent Clp protease proteolytic subunit (199 aa).

S97 (nucleophile) is an active-site residue. The active site involves H122.

Belongs to the peptidase S14 family. Fourteen ClpP subunits assemble into 2 heptameric rings which stack back to back to give a disk-like structure with a central cavity, resembling the structure of eukaryotic proteasomes.

It localises to the cytoplasm. The catalysed reaction is Hydrolysis of proteins to small peptides in the presence of ATP and magnesium. alpha-casein is the usual test substrate. In the absence of ATP, only oligopeptides shorter than five residues are hydrolyzed (such as succinyl-Leu-Tyr-|-NHMec, and Leu-Tyr-Leu-|-Tyr-Trp, in which cleavage of the -Tyr-|-Leu- and -Tyr-|-Trp bonds also occurs).. Its function is as follows. Cleaves peptides in various proteins in a process that requires ATP hydrolysis. Has a chymotrypsin-like activity. Plays a major role in the degradation of misfolded proteins. The protein is ATP-dependent Clp protease proteolytic subunit of Citrifermentans bemidjiense (strain ATCC BAA-1014 / DSM 16622 / JCM 12645 / Bem) (Geobacter bemidjiensis).